A 319-amino-acid polypeptide reads, in one-letter code: Cobalamin biosynthesis protein CobD (319 aa).

The next 4 helical transmembrane spans lie at 56–76 (GLWIVVVGLTWLVSWGCLWLM), 153–173 (VDGVIAPLFFLMIGGAPLAMA), 204–224 (LANWLPARLSWLLLSAAAWFI), and 290–310 (IPLSIYLMMIASQLALLLFAL).

It belongs to the CobD/CbiB family.

It localises to the cell membrane. The protein operates within cofactor biosynthesis; adenosylcobalamin biosynthesis. In terms of biological role, converts cobyric acid to cobinamide by the addition of aminopropanol on the F carboxylic group. In Photorhabdus laumondii subsp. laumondii (strain DSM 15139 / CIP 105565 / TT01) (Photorhabdus luminescens subsp. laumondii), this protein is Cobalamin biosynthesis protein CobD.